A 500-amino-acid chain; its full sequence is Lysine--tRNA ligase (500 aa).

2 residues coordinate Mg(2+): glutamate 410 and glutamate 417.

It belongs to the class-II aminoacyl-tRNA synthetase family. In terms of assembly, homodimer. It depends on Mg(2+) as a cofactor.

It localises to the cytoplasm. The enzyme catalyses tRNA(Lys) + L-lysine + ATP = L-lysyl-tRNA(Lys) + AMP + diphosphate. The chain is Lysine--tRNA ligase from Mycoplasma capricolum subsp. capricolum (strain California kid / ATCC 27343 / NCTC 10154).